Here is a 411-residue protein sequence, read N- to C-terminus: O-glucosyltransferase rumi (411 aa).

The N-terminal stretch at 1–20 (MLINHLIVVLLISLVGTGGA) is a signal peptide. 4 cysteine pairs are disulfide-bonded: Cys64/Cys75, Cys73/Cys378, Cys120/Cys126, and Cys282/Cys305. Asp151 acts as the Proton donor/acceptor in catalysis. The segment at 192-197 (ATKLHP) is interaction with the consensus sequence C-X-S-X-[PA]-C in peptide substrates. UDP-alpha-D-glucose-binding positions include 229-233 (RGSRT), Arg237, 276-278 (VSF), and 294-298 (AASFR). Residues 408–411 (KDEL) carry the Prevents secretion from ER motif.

Belongs to the glycosyltransferase 90 family.

The protein localises to the endoplasmic reticulum lumen. It functions in the pathway protein modification; protein glycosylation. In terms of biological role, protein O-glucosyltransferase. Catalyzes the reaction that attaches glucose through an O-glycosidic linkage to a conserved serine residue found in the consensus sequence C-X-S-X-[PA]-C in epidermal growth factor-like repeats. Regulates Notch signaling by glucosylating Notch in the ER, glucosylation is required for the correct folding and cleavage of Notch. The protein is O-glucosyltransferase rumi of Drosophila melanogaster (Fruit fly).